A 799-amino-acid polypeptide reads, in one-letter code: High affinity nerve growth factor receptor (799 aa).

The first 33 residues, 1–33, serve as a signal peptide directing secretion; that stretch reads MLRGQRLGQLGWHRPAAGLGSLMTSLMLACASA. The Extracellular segment spans residues 34–420; that stretch reads ASCREVCCPV…VEKKDETPFG (387 aa). Intrachain disulfides connect cysteine 36–cysteine 41 and cysteine 40–cysteine 50. N-linked (GlcNAc...) asparagine glycosylation is present at asparagine 67. LRR repeat units follow at residues 90–113 and 116–137; these read LGEL…AFRF and RLSH…TVQG. N-linked (GlcNAc...) asparagine glycosylation is found at asparagine 121, asparagine 190, asparagine 204, asparagine 255, asparagine 264, asparagine 320, asparagine 325, asparagine 341, asparagine 361, and asparagine 404. Positions 148–219 constitute an LRRCT domain; the sequence is NPLHCSCALF…GDDVFLQCQV (72 aa). An intrachain disulfide couples cysteine 154 to cysteine 193. Ig-like C2-type domains follow at residues 196 to 285 and 205 to 368; these read PTVK…VSVS and DSVE…LAAN. 2 disulfides stabilise this stretch: cysteine 217-cysteine 267 and cysteine 302-cysteine 348. The chain crosses the membrane as a helical span at residues 421–441; it reads VSVAVGLAVSAALFLSALLLV. The Cytoplasmic portion of the chain corresponds to 442-799; it reads LNKCGQRSKF…APPSYLDVLG (358 aa). Positions 472-493 are interaction with SQSTM1; that stretch reads MTLGGSSLSPTEGKGSGLQGHI. Phosphotyrosine; by autocatalysis is present on tyrosine 499. Positions 513-784 constitute a Protein kinase domain; it reads IILKWELGEG…LSMKDVHARL (272 aa). ATP-binding positions include 519 to 527 and lysine 547; that span reads LGEGAFGKV. The active-site Proton acceptor is aspartate 653. Phosphotyrosine; by autocatalysis occurs at positions 679, 683, 684, and 794.

This sequence belongs to the protein kinase superfamily. Tyr protein kinase family. Insulin receptor subfamily. Exists in a dynamic equilibrium between monomeric (low affinity) and dimeric (high affinity) structures. Homodimerization is induced by binding of a NGF dimer. Found in a complex, at least composed of KIDINS220, MAGI2, NTRK1 and RAPGEF2; the complex is mainly formed at late endosomes in a nerve growth factor (NGF)-dependent manner. Interacts with RAPGEF2; the interaction is strengthened after NGF stimulation. Interacts with SQSTM1; bridges NTRK1 to NGFR. Forms a ternary complex with NGFR and KIDINS220; this complex is affected by the expression levels of KIDINS220 and an increase in KIDINS220 expression leads to a decreased association of NGFR and NTRK1. Interacts (phosphorylated upon activation by NGF) with SHC1; mediates SHC1 phosphorylation and activation. Interacts (phosphorylated upon activation by NGF) with PLCG1; mediates PLCG1 phosphorylation and activation. Interacts (phosphorylated) with SH2B1 and SH2B2. Interacts with GRB2. Interacts with PIK3R1. Interacts with FRS2. Interacts with SORT1; may regulate NTRK1 anterograde axonal transport. Interacts with SH2D1A; regulates NTRK1. Interacts with NRADD. Interacts with RAB7A. Interacts with PTPRS. Interacts with USP36; USP36 does not deubiquitinate NTRK1. Interacts with GGA3. Interacts with TSPAN1; this interaction promotes NTRK1 stability. In terms of processing, ligand-mediated autophosphorylation. Interaction with SQSTM1 is phosphotyrosine-dependent. Autophosphorylation at Tyr-499 mediates interaction and phosphorylation of SHC1. N-glycosylated. Post-translationally, ubiquitinated. Undergoes polyubiquitination upon activation; regulated by NGFR. Ubiquitination by NEDD4L leads to degradation. Ubiquitination regulates the internalization of the receptor.

It localises to the cell membrane. It is found in the early endosome membrane. The protein localises to the late endosome membrane. Its subcellular location is the recycling endosome membrane. The enzyme catalyses L-tyrosyl-[protein] + ATP = O-phospho-L-tyrosyl-[protein] + ADP + H(+). The pro-survival signaling effect of NTRK1 in neurons requires its endocytosis into signaling early endosomes and its retrograde axonal transport. This is regulated by different proteins including CFL1, RAC1 and SORT1. NTF3 is unable to induce this signaling probably due to the lability of the NTF3-NTRK1 complex in endosomes. SH2D1A inhibits the autophosphorylation of the receptor, and alters the recruitment and activation of downstream effectors and signaling cascades. Regulated by NGFR. In terms of biological role, receptor tyrosine kinase involved in the development and the maturation of the central and peripheral nervous systems through regulation of proliferation, differentiation and survival of sympathetic and nervous neurons. High affinity receptor for NGF which is its primary ligand, it can also bind and be activated by NTF3/neurotrophin-3. However, NTF3 only supports axonal extension through NTRK1 but has no effect on neuron survival. Upon dimeric NGF ligand-binding, undergoes homodimerization, autophosphorylation and activation. Recruits, phosphorylates and/or activates several downstream effectors including SHC1, FRS2, SH2B1, SH2B2 and PLCG1 that regulate distinct overlapping signaling cascades driving cell survival and differentiation. Through SHC1 and FRS2 activates a GRB2-Ras-MAPK cascade that regulates cell differentiation and survival. Through PLCG1 controls NF-Kappa-B activation and the transcription of genes involved in cell survival. Through SHC1 and SH2B1 controls a Ras-PI3 kinase-AKT1 signaling cascade that is also regulating survival. In absence of ligand and activation, may promote cell death, making the survival of neurons dependent on trophic factors. In Mus musculus (Mouse), this protein is High affinity nerve growth factor receptor (Ntrk1).